A 108-amino-acid chain; its full sequence is Protein YcgL (108 aa).

The 85-residue stretch at 12 to 96 folds into the YcgL domain; that stretch reads MFCVIYRSSK…PPEDLLKQHL (85 aa).

The sequence is that of Protein YcgL from Escherichia coli O17:K52:H18 (strain UMN026 / ExPEC).